A 354-amino-acid polypeptide reads, in one-letter code: Rhodopsin (354 aa).

At 1 to 36 (MNGTEGPNFYIPMSNKTGVVRSPFEYPQYYLAEPWQ) the chain is on the extracellular side. Residues Asn2 and Asn15 are each glycosylated (N-linked (GlcNAc...) asparagine). The chain crosses the membrane as a helical span at residues 37–61 (YSILCAYMFLLILLGFPINFMTLYV). Residues 62–73 (TIQHKKLRTPLN) are Cytoplasmic-facing. The helical transmembrane segment at 74–96 (YILLNLAFANHFMVLCGFTVTMY) threads the bilayer. Residues 97 to 110 (SSMNGYFILGATGC) are Extracellular-facing. An intrachain disulfide couples Cys110 to Cys187. A helical transmembrane segment spans residues 111-133 (YVEGFFATLGGEIALWSLVVLAI). Residues 134–136 (ERY) carry the 'Ionic lock' involved in activated form stabilization motif. The Cytoplasmic segment spans residues 134–152 (ERYVVVCKPMSNFRFSENH). A helical membrane pass occupies residues 153 to 173 (AVMGVAFTWIMALSCAVPPLL). Topologically, residues 174–202 (GWSRYIPEGMQCSCGVDYYTLKPEVNNES) are extracellular. A helical membrane pass occupies residues 203 to 224 (FVIYMFVVHFTIPLIIIFFCYG). At 225 to 252 (RLVCTVKEAAAQQQESATTQKAEKEVTR) the chain is on the cytoplasmic side. The chain crosses the membrane as a helical span at residues 253 to 274 (MVIIMVVFFLICWVPYASVAFF). Over 275–286 (IFSNQGSEFGPI) the chain is Extracellular. The chain crosses the membrane as a helical span at residues 287 to 308 (FMTVPAFFAKSSSIYNPVIYIM). Lys296 is subject to N6-(retinylidene)lysine. The Cytoplasmic segment spans residues 309 to 354 (LNKQFRNCMITTLCCGKNPFGEDDASSAATSKTEASSVSSSQVSPA). Residues Cys322 and Cys323 are each lipidated (S-palmitoyl cysteine). The disordered stretch occupies residues 331–354 (DDASSAATSKTEASSVSSSQVSPA). Low complexity predominate over residues 334–354 (SSAATSKTEASSVSSSQVSPA).

Belongs to the G-protein coupled receptor 1 family. Opsin subfamily. In terms of processing, contains one covalently linked retinal chromophore. Upon light absorption, the covalently bound 11-cis-retinal is converted to all-trans-retinal. After hydrolysis of the Schiff base and release of the covalently bound all-trans-retinal, active rhodopsin is regenerated by binding of a fresh molecule of 11-cis-retinal.

The protein localises to the membrane. The protein resides in the cell projection. It is found in the cilium. It localises to the photoreceptor outer segment. Functionally, photoreceptor required for image-forming vision at low light intensity. Required for photoreceptor cell viability after birth. Light-induced isomerization of 11-cis to all-trans retinal triggers a conformational change that activates signaling via G-proteins. Subsequent receptor phosphorylation mediates displacement of the bound G-protein alpha subunit by arrestin and terminates signaling. The protein is Rhodopsin (RHO) of Bufo bufo (European toad).